The sequence spans 190 residues: Nuclear transcription factor Y subunit B-2 (190 aa).

The interval 1–30 is disordered; it reads MGDSDRDSGGGQNGNNQNGQSSLSPREQDR. The DNA-binding element occupies 32–38; that stretch reads LPIANVS. Residues 59-70 are subunit association domain (SAD); it reads MQECVSEFISFV. A disordered region spans residues 168 to 190; that stretch reads HMYGATGGGSDSGGGAASGRTRT. A compositionally biased stretch (gly residues) spans 172–184; sequence ATGGGSDSGGGAA.

It belongs to the NFYB/HAP3 subunit family. In terms of assembly, heterotrimeric transcription factor composed of three components, NF-YA, NF-YB and NF-YC. NF-YB and NF-YC must interact and dimerize for NF-YA association and DNA binding. Binds directly with DPB3-1. As to expression, ubiquitous. Predominantly expressed in flowers and siliques.

The protein resides in the nucleus. In terms of biological role, component of the NF-Y/HAP transcription factor complex. The NF-Y complex stimulates the transcription of various genes by recognizing and binding to a CCAAT motif in promoters. The chain is Nuclear transcription factor Y subunit B-2 from Arabidopsis thaliana (Mouse-ear cress).